The chain runs to 619 residues: Leucine aminopeptidase 2 (619 aa).

Residues 141–143 and 273–278 contribute to the a peptide site; these read QCQ and PYGGME. A Zn(2+)-binding site is contributed by His-302. The active-site Proton acceptor is the Glu-303. Zn(2+) contacts are provided by His-306 and Glu-325. Residue Tyr-390 is the Proton donor of the active site.

It belongs to the peptidase M1 family. Zn(2+) is required as a cofactor.

It is found in the cytoplasm. The protein localises to the nucleus. It carries out the reaction an epoxide + H2O = an ethanediol. Aminopeptidase that preferentially cleaves di- and tripeptides. Also has low epoxide hydrolase activity (in vitro). Can hydrolyze the epoxide leukotriene LTA(4) but it forms preferentially 5,6-dihydroxy-7,9,11,14-eicosatetraenoic acid rather than the cytokine leukotriene B(4) as the product compared to the homologous mammalian enzyme (in vitro). This Coccidioides immitis (strain RS) (Valley fever fungus) protein is Leucine aminopeptidase 2.